The sequence spans 433 residues: Trigger factor (433 aa).

Residues 163-248 (GDTVNIDFSG…VNEIKFKEVP (86 aa)) enclose the PPIase FKBP-type domain.

It belongs to the FKBP-type PPIase family. Tig subfamily.

The protein resides in the cytoplasm. It carries out the reaction [protein]-peptidylproline (omega=180) = [protein]-peptidylproline (omega=0). Its function is as follows. Involved in protein export. Acts as a chaperone by maintaining the newly synthesized protein in an open conformation. Functions as a peptidyl-prolyl cis-trans isomerase. This is Trigger factor from Staphylococcus aureus (strain COL).